Here is a 207-residue protein sequence, read N- to C-terminus: MVKSDNITWHQSQVSKAERQALNHHKSVVLWFTGLSGSGKSTIANAVEKALFDQQVGSYVLDGDNMRFGLNKNLGFSAEDREENIRRIGEVAKLFVDAGVITLTAFISPYRADRDKVRANLEVDEFIEVFVDTPLEVCEQRDVKQLYAKARRGEITGFTGIDAPYEAPIDPEITIDTSKQPLTASVQQVLNYLAEHHYVSLVTANEN.

Gly-34 to Ser-41 provides a ligand contact to ATP. Ser-108 functions as the Phosphoserine intermediate in the catalytic mechanism.

The protein belongs to the APS kinase family.

The enzyme catalyses adenosine 5'-phosphosulfate + ATP = 3'-phosphoadenylyl sulfate + ADP + H(+). Its pathway is sulfur metabolism; hydrogen sulfide biosynthesis; sulfite from sulfate: step 2/3. Catalyzes the synthesis of activated sulfate. The sequence is that of Adenylyl-sulfate kinase from Lactiplantibacillus plantarum (strain ATCC BAA-793 / NCIMB 8826 / WCFS1) (Lactobacillus plantarum).